A 378-amino-acid chain; its full sequence is Peptide methionine sulfoxide reductase MsrA/MsrB (378 aa).

The tract at residues 40–197 (QQATLAGGCF…KVRYNYYRYA (158 aa)) is peptide methionine sulfoxide reductase A. C48 is an active-site residue. One can recognise a MsrB domain in the interval 240–362 (DEQIRAKLTS…NSAAMRFIPK (123 aa)). The active-site Nucleophile is C351.

It in the N-terminal section; belongs to the MsrA Met sulfoxide reductase family. This sequence in the C-terminal section; belongs to the MsrB Met sulfoxide reductase family.

It carries out the reaction L-methionyl-[protein] + [thioredoxin]-disulfide + H2O = L-methionyl-(S)-S-oxide-[protein] + [thioredoxin]-dithiol. The catalysed reaction is [thioredoxin]-disulfide + L-methionine + H2O = L-methionine (S)-S-oxide + [thioredoxin]-dithiol. It catalyses the reaction L-methionyl-[protein] + [thioredoxin]-disulfide + H2O = L-methionyl-(R)-S-oxide-[protein] + [thioredoxin]-dithiol. Has an important function as a repair enzyme for proteins that have been inactivated by oxidation. Catalyzes the reversible oxidation-reduction of methionine sulfoxide in proteins to methionine. This Vibrio cholerae serotype O1 (strain ATCC 39315 / El Tor Inaba N16961) protein is Peptide methionine sulfoxide reductase MsrA/MsrB (msrAB).